We begin with the raw amino-acid sequence, 350 residues long: Small ribosomal subunit biogenesis GTPase RsgA (350 aa).

Residues 1 to 17 (MSKNKLSKGQQRRVNAN) are compositionally biased toward polar residues. The disordered stretch occupies residues 1 to 27 (MSKNKLSKGQQRRVNANHQRRLKTSAE). Residues 104 to 273 (TSVLTRPDFY…VIDSPGVREF (170 aa)) enclose the CP-type G domain. GTP contacts are provided by residues 160 to 163 (NKID) and 214 to 222 (GQSGVGKSS). The Zn(2+) site is built by C297, C302, H304, and C310.

This sequence belongs to the TRAFAC class YlqF/YawG GTPase family. RsgA subfamily. In terms of assembly, monomer. Associates with 30S ribosomal subunit, binds 16S rRNA. The cofactor is Zn(2+).

It is found in the cytoplasm. In terms of biological role, one of several proteins that assist in the late maturation steps of the functional core of the 30S ribosomal subunit. Helps release RbfA from mature subunits. May play a role in the assembly of ribosomal proteins into the subunit. Circularly permuted GTPase that catalyzes slow GTP hydrolysis, GTPase activity is stimulated by the 30S ribosomal subunit. The sequence is that of Small ribosomal subunit biogenesis GTPase RsgA from Salmonella agona (strain SL483).